The chain runs to 237 residues: Proteasome subunit alpha (237 aa).

The protein belongs to the peptidase T1A family. The 20S proteasome core is composed of 14 alpha and 14 beta subunits that assemble into four stacked heptameric rings, resulting in a barrel-shaped structure. The two inner rings, each composed of seven catalytic beta subunits, are sandwiched by two outer rings, each composed of seven alpha subunits. The catalytic chamber with the active sites is on the inside of the barrel. Has a gated structure, the ends of the cylinder being occluded by the N-termini of the alpha-subunits. Is capped by the proteasome-associated ATPase, ARC.

It localises to the cytoplasm. The protein operates within protein degradation; proteasomal Pup-dependent pathway. The formation of the proteasomal ATPase ARC-20S proteasome complex, likely via the docking of the C-termini of ARC into the intersubunit pockets in the alpha-rings, may trigger opening of the gate for substrate entry. Interconversion between the open-gate and close-gate conformations leads to a dynamic regulation of the 20S proteasome proteolysis activity. Component of the proteasome core, a large protease complex with broad specificity involved in protein degradation. The chain is Proteasome subunit alpha from Kineococcus radiotolerans (strain ATCC BAA-149 / DSM 14245 / SRS30216).